Reading from the N-terminus, the 333-residue chain is tRNA-modifying protein YgfZ (333 aa).

Tryptophan 33 and tryptophan 195 together coordinate folate.

Belongs to the tRNA-modifying YgfZ family.

The protein resides in the cytoplasm. In terms of biological role, folate-binding protein involved in regulating the level of ATP-DnaA and in the modification of some tRNAs. It is probably a key factor in regulatory networks that act via tRNA modification, such as initiation of chromosomal replication. The sequence is that of tRNA-modifying protein YgfZ from Pectobacterium atrosepticum (strain SCRI 1043 / ATCC BAA-672) (Erwinia carotovora subsp. atroseptica).